A 159-amino-acid chain; its full sequence is MAKEGLPAVELPDASGLKVAVVTARWNAEICDRLHKHAVDAGRAAGATVSEYRVIGALELPVVVQELARTHDAVVALGCVVRGGTPHFDYVCDSVTEGLTRIALDTSTPIGNGVLTTNTEEQAVERSGGEGSVEDKGAEAMVAALDTALVLSQIRATEG.

Residues tryptophan 26, 57-59 (ALE), and 79-81 (CVV) each bind 5-amino-6-(D-ribitylamino)uracil. Residue 84–85 (GT) coordinates (2S)-2-hydroxy-3-oxobutyl phosphate. Histidine 87 (proton donor) is an active-site residue. Residue asparagine 112 participates in 5-amino-6-(D-ribitylamino)uracil binding. Position 126 (arginine 126) interacts with (2S)-2-hydroxy-3-oxobutyl phosphate.

It belongs to the DMRL synthase family.

The enzyme catalyses (2S)-2-hydroxy-3-oxobutyl phosphate + 5-amino-6-(D-ribitylamino)uracil = 6,7-dimethyl-8-(1-D-ribityl)lumazine + phosphate + 2 H2O + H(+). It participates in cofactor biosynthesis; riboflavin biosynthesis; riboflavin from 2-hydroxy-3-oxobutyl phosphate and 5-amino-6-(D-ribitylamino)uracil: step 1/2. Functionally, catalyzes the formation of 6,7-dimethyl-8-ribityllumazine by condensation of 5-amino-6-(D-ribitylamino)uracil with 3,4-dihydroxy-2-butanone 4-phosphate. This is the penultimate step in the biosynthesis of riboflavin. This Corynebacterium glutamicum (strain ATCC 13032 / DSM 20300 / JCM 1318 / BCRC 11384 / CCUG 27702 / LMG 3730 / NBRC 12168 / NCIMB 10025 / NRRL B-2784 / 534) protein is 6,7-dimethyl-8-ribityllumazine synthase.